The following is a 563-amino-acid chain: Forkhead box protein O (563 aa).

Disordered stretches follow at residues 1–72 and 177–243; these read MDDF…DPQQ and KSVR…SYQL. T43 is modified (phosphothreonine; by PKB/AKT1). The segment covering 58–72 has biased composition (polar residues); sequence TKASNQQLANGDPQQ. Positions 90-196 form a DNA-binding region, fork-head; the sequence is WGNLSYADLI…ETSRYEKRRG (107 aa). S185 is subject to Phosphoserine; by PKB/AKT1. Residues 216-225 are compositionally biased toward polar residues; the sequence is ATPSPSSSVS. Position 253 is a phosphoserine; by PKB/AKT1 (S253). A phosphoserine mark is found at S256, S257, and S262. Positions 317–371 are disordered; sequence AASGLPTQPPPPYQPPQHPQHTQGYALNGPGLSPNSVTTTMSPAYPNSEPSSDSL. Positions 323–334 are enriched in pro residues; that stretch reads TQPPPPYQPPQH. Residues 349–358 are compositionally biased toward polar residues; it reads SPNSVTTTMS.

As to quaternary structure, interacts with melt.

It is found in the cytoplasm. The protein resides in the nucleus. Functionally, transcription factor involved in the regulation of the insulin signaling pathway. Consistently activates both the downstream target Thor\d4EBP and the feedback control target InR. Involved in negative regulation of the cell cycle, modulating cell growth and proliferation. In response to cellular stresses, such as nutrient deprivation or increased levels of reactive oxygen species, foxo is activated and inhibits growth through the action of target genes such as Thor. Foxo activated in the adult fat body can regulate lifespan in adults; an insulin peptide itself may function as one secondary messenger of insulin-regulated aging. Also regulates Lip4, homolog of human acid lipases, thereby acting as a key modulator of lipid metabolism by insulin signaling and integrates insulin responses to glucose and lipid homeostasis. In Drosophila mojavensis (Fruit fly), this protein is Forkhead box protein O.